A 201-amino-acid chain; its full sequence is Recombination protein RecR (201 aa).

The segment at 55–70 (CVCCGAFCEGRTCALC) adopts a C4-type zinc-finger fold. A Toprim domain is found at 78–173 (GIICVVERAQ…IVTRLASGIP (96 aa)).

It belongs to the RecR family.

Functionally, may play a role in DNA repair. It seems to be involved in an RecBC-independent recombinational process of DNA repair. It may act with RecF and RecO. This is Recombination protein RecR from Treponema pallidum (strain Nichols).